The sequence spans 446 residues: tRNA-2-methylthio-N(6)-dimethylallyladenosine synthase (446 aa).

Positions 2–122 (KKAYVKSYGC…LPDLLRQSRE (121 aa)) constitute an MTTase N-terminal domain. Cys11, Cys47, Cys85, Cys157, Cys161, and Cys164 together coordinate [4Fe-4S] cluster. In terms of domain architecture, Radical SAM core spans 143 to 375 (RNRGVTGFLT…QQLLDQQRHA (233 aa)). Positions 378–440 (AAAVGTVAEI…SNSLFGEVLE (63 aa)) constitute a TRAM domain.

The protein belongs to the methylthiotransferase family. MiaB subfamily. Monomer. The cofactor is [4Fe-4S] cluster.

The protein localises to the cytoplasm. It catalyses the reaction N(6)-dimethylallyladenosine(37) in tRNA + (sulfur carrier)-SH + AH2 + 2 S-adenosyl-L-methionine = 2-methylsulfanyl-N(6)-dimethylallyladenosine(37) in tRNA + (sulfur carrier)-H + 5'-deoxyadenosine + L-methionine + A + S-adenosyl-L-homocysteine + 2 H(+). Its function is as follows. Catalyzes the methylthiolation of N6-(dimethylallyl)adenosine (i(6)A), leading to the formation of 2-methylthio-N6-(dimethylallyl)adenosine (ms(2)i(6)A) at position 37 in tRNAs that read codons beginning with uridine. This chain is tRNA-2-methylthio-N(6)-dimethylallyladenosine synthase, found in Methylorubrum populi (strain ATCC BAA-705 / NCIMB 13946 / BJ001) (Methylobacterium populi).